Here is a 1027-residue protein sequence, read N- to C-terminus: Abnormal embryogenesis protein 30 (1027 aa).

WD repeat units follow at residues 18-65 (RTPF…IQAV) and 70-109 (KLDS…VRFS). 2 disordered regions span residues 619–655 (NDSS…ACDL) and 1005–1027 (AMDS…DDDI). 2 stretches are compositionally biased toward acidic residues: residues 625-647 (LEED…EPEG) and 1014-1027 (DNGE…DDDI).

This sequence belongs to the APC4 family. In terms of assembly, the APC/C is probably composed of at least 12 subunits: apc-2, apc-10, apc-11, cdc-26, emb-1, emb-27, emb-30, mat-1, mat-2, mat-3, such-1 and gfi-3.

It participates in protein modification; protein ubiquitination. Probable component of the anaphase promoting complex/cyclosome (APC/C), a cell cycle-regulated E3 ubiquitin ligase that controls progression through mitosis and the G1 phase of the cell cycle. The APC/C complex acts by mediating ubiquitination and subsequent degradation of target proteins. Developmental role in early embryogenesis and the metaphase to anaphase transition in oocyte and spermatocyte meiosis and mitosis in somatic and germ cells. Required for embryonic anterior-posterior axis formation. Negatively regulates ify-1 protein levels during meiosis I. Plays a role in regulating the abundance of glr-1 receptors in postmitotic neurons, which may in turn control animal locomotion. Involved in regulating GABA neurotransmitter release at neuromuscular junctions in GABA motor neurons. The sequence is that of Abnormal embryogenesis protein 30 from Caenorhabditis elegans.